A 157-amino-acid polypeptide reads, in one-letter code: Transcriptional repressor NrdR (157 aa).

Residues Cys-3–Cys-34 fold into a zinc finger. Residues Leu-49–Asp-139 enclose the ATP-cone domain.

Belongs to the NrdR family. Requires Zn(2+) as cofactor.

Functionally, negatively regulates transcription of bacterial ribonucleotide reductase nrd genes and operons by binding to NrdR-boxes. This chain is Transcriptional repressor NrdR, found in Granulibacter bethesdensis (strain ATCC BAA-1260 / CGDNIH1).